The chain runs to 658 residues: Aspartate--tRNA ligase, mitochondrial (658 aa).

Glu-198 is a binding site for L-aspartate. The segment at 226–229 (QQYK) is aspartate. Residue Arg-248 coordinates L-aspartate. ATP-binding positions include 248–250 (RDE) and Glu-553. Position 560 (Arg-560) interacts with L-aspartate. 604-607 (GFDR) is an ATP binding site.

The protein belongs to the class-II aminoacyl-tRNA synthetase family. Type 1 subfamily.

The protein localises to the mitochondrion matrix. It catalyses the reaction tRNA(Asp) + L-aspartate + ATP = L-aspartyl-tRNA(Asp) + AMP + diphosphate. Its function is as follows. Catalyzes the attachment of aspartate to tRNA(Asp) in the mitochondrion. This Saccharomyces cerevisiae (strain ATCC 204508 / S288c) (Baker's yeast) protein is Aspartate--tRNA ligase, mitochondrial (MSD1).